Reading from the N-terminus, the 514-residue chain is Sugar transport protein 11 (514 aa).

Over 1–19 the chain is Cytoplasmic; that stretch reads MAGGAFIDESGHGGDYEGR. Residues 20–40 traverse the membrane as a helical segment; that stretch reads VTAFVMITCIVAAMGGLLFGY. Topologically, residues 41 to 82 are extracellular; sequence DIGISGGVISMEDFLTKFFPDVLRQMQNKRGRETEYCKYDNE. The chain crosses the membrane as a helical span at residues 83 to 103; the sequence is LLTLFTSSLYLAALFASFLAS. Over 104 to 112 the chain is Cytoplasmic; it reads TITRLFGRK. A helical membrane pass occupies residues 113-133; the sequence is VSMVIGSLAFLSGALLNGLAI. At 134–137 the chain is on the extracellular side; sequence NLEM. The chain crosses the membrane as a helical span at residues 138–158; that stretch reads LIIGRLFLGVGVGFANQSVPL. The Cytoplasmic portion of the chain corresponds to 159 to 169; sequence YLSEMAPAKIR. Residues 170–190 traverse the membrane as a helical segment; sequence GALNIGFQLAITIGILAANIV. Over 191 to 204 the chain is Extracellular; sequence NYVTPKLQNGIGWR. The helical transmembrane segment at 205 to 225 threads the bilayer; it reads LSLGLAGVPAVMMLVGCFFLP. The Cytoplasmic segment spans residues 226–290; that stretch reads DTPNSILERG…RYRPQLTFCT (65 aa). Residues 291-311 form a helical membrane-spanning segment; that stretch reads FIPFFQQLTGINVIMFYAPVL. The Extracellular portion of the chain corresponds to 312-320; that stretch reads FKTIGFGND. The helical transmembrane segment at 321 to 341 threads the bilayer; sequence ASLISAVITGLVNVLSTIVSI. Over 342 to 350 the chain is Cytoplasmic; sequence YSVDKFGRR. Residues 351-371 form a helical membrane-spanning segment; the sequence is ALFLQGGFQMIVTQIAVGSMI. Residues 372–389 lie on the Extracellular side of the membrane; sequence GWKFGFNGEGNLSGVDAD. The helical transmembrane segment at 390–410 threads the bilayer; the sequence is IILALICLYVAGFAWSWGPLG. Over 411–428 the chain is Cytoplasmic; the sequence is WLVPSEICPLEIRSAGQS. The chain crosses the membrane as a helical span at residues 429-449; the sequence is LNVSVNMFFTFFIGQFFLTML. Residues 450–453 lie on the Extracellular side of the membrane; it reads CHMK. The helical transmembrane segment at 454-474 threads the bilayer; that stretch reads FGLFYFFAGMVLIMTIFIYFL. Over 475-514 the chain is Cytoplasmic; it reads LPETKGVPIEEMGKVWKEHRYWGKYSNNDDGDDVDDDAYF.

This sequence belongs to the major facilitator superfamily. Sugar transporter (TC 2.A.1.1) family. In terms of tissue distribution, specifically expressed in germinating pollen and pollen tube (at protein level).

The protein resides in the cell membrane. Its activity is regulated as follows. Inhibited by uncouplers such as 2,4-dinitrophenol and carbonyl cyanide-m-chlorophenyl-hydrazone. Functionally, mediates an active uptake of hexoses, probably by sugar/hydrogen symport. Can transport glucose, galactose, mannose, xylose and 3-O-methylglucose, but not fructose and ribose. The polypeptide is Sugar transport protein 11 (STP11) (Arabidopsis thaliana (Mouse-ear cress)).